Consider the following 190-residue polypeptide: Threonylcarbamoyl-AMP synthase (190 aa).

In terms of domain architecture, YrdC-like spans 7–190 (GDAIAAAIDV…ALTGELFRQG (184 aa)).

The protein belongs to the SUA5 family. TsaC subfamily.

Its subcellular location is the cytoplasm. The catalysed reaction is L-threonine + hydrogencarbonate + ATP = L-threonylcarbamoyladenylate + diphosphate + H2O. In terms of biological role, required for the formation of a threonylcarbamoyl group on adenosine at position 37 (t(6)A37) in tRNAs that read codons beginning with adenine. Catalyzes the conversion of L-threonine, HCO(3)(-)/CO(2) and ATP to give threonylcarbamoyl-AMP (TC-AMP) as the acyladenylate intermediate, with the release of diphosphate. This chain is Threonylcarbamoyl-AMP synthase, found in Shigella boydii serotype 4 (strain Sb227).